Reading from the N-terminus, the 337-residue chain is Nicotinate-nucleotide--dimethylbenzimidazole phosphoribosyltransferase (337 aa).

The active-site Proton acceptor is E305.

It belongs to the CobT family.

The enzyme catalyses 5,6-dimethylbenzimidazole + nicotinate beta-D-ribonucleotide = alpha-ribazole 5'-phosphate + nicotinate + H(+). It participates in nucleoside biosynthesis; alpha-ribazole biosynthesis; alpha-ribazole from 5,6-dimethylbenzimidazole: step 1/2. Catalyzes the synthesis of alpha-ribazole-5'-phosphate from nicotinate mononucleotide (NAMN) and 5,6-dimethylbenzimidazole (DMB). The polypeptide is Nicotinate-nucleotide--dimethylbenzimidazole phosphoribosyltransferase (Roseobacter denitrificans (strain ATCC 33942 / OCh 114) (Erythrobacter sp. (strain OCh 114))).